Reading from the N-terminus, the 100-residue chain is ESAT-6-like protein EsxB (100 aa).

The protein belongs to the WXG100 family. CFP-10 subfamily. Forms a tight 1:1 complex with EsxA.

Its subcellular location is the secreted. A secreted protein that might play a role in virulence. Might serve as a chaperone to prevent uncontrolled membrane lysis by its partner EsxA. The protein is ESAT-6-like protein EsxB (esxB) of Mycobacterium leprae (strain TN).